A 118-amino-acid chain; its full sequence is Hydrogenase maturation factor HypA (118 aa).

His-2 is a binding site for Ni(2+). Zn(2+) contacts are provided by Cys-73, Cys-76, Cys-89, and Cys-92.

Belongs to the HypA/HybF family.

Involved in the maturation of [NiFe] hydrogenases. Required for nickel insertion into the metal center of the hydrogenase. This is Hydrogenase maturation factor HypA from Shewanella sp. (strain MR-7).